We begin with the raw amino-acid sequence, 484 residues long: MATCSRQFTSSSSMKGSCGIGGGSSRMSSILAGGSCRAPSTYGGMSVTSSRFSSGGACGIGGGYGGSFSSSSFGGGLGSGFGGRFDGFGGGFGGGLGGGFGGGLGGGLGGGIGDGLLVGSEKVTMQNLNDRLATYLDKVRALEEANTELEVKIRDWYQRQRPTEIKDYSPYFKTIEDLKSKILAATVDNANVLLQIDNARLAADDFRTKFETEQSLRMSVEADINGLRRVLDELTLARADLEMQIESLKEELAYLKKNHEEEMASMRGQVGGDVNVEMDAAPGVDLSRILNEMRDQYEKMAEKNRKDAEEWFFSKTEELNREVATNSELVQSGKSEISELRRTMQNLEIELQSQLSMKASLENNLEETKGRYCMQLAQIQEMIGSVEEQLAQLRCEMEQQNQEYKILLDVKTRLEQEIATYRRLLEGEDAHLSSSQFSSSSQFSSGSQSSRDVTSTNRQIRTKVMDVHDGKVVSTHEQVLRTKN.

The interval 1 to 20 (MATCSRQFTSSSSMKGSCGI) is disordered. A head region spans residues 1-120 (MATCSRQFTS…GIGDGLLVGS (120 aa)). The segment at 121-156 (EKVTMQNLNDRLATYLDKVRALEEANTELEVKIRDW) is coil 1A. The IF rod domain maps to 121–432 (EKVTMQNLND…RLLEGEDAHL (312 aa)). A linker 1 region spans residues 157 to 174 (YQRQRPTEIKDYSPYFKT). The segment at 175–266 (IEDLKSKILA…KNHEEEMASM (92 aa)) is coil 1B. Residues 267–289 (RGQVGGDVNVEMDAAPGVDLSRI) form a linker 12 region. Residues 290 to 428 (LNEMRDQYEK…ATYRRLLEGE (139 aa)) form a coil 2 region. Positions 429–484 (DAHLSSSQFSSSSQFSSGSQSSRDVTSTNRQIRTKVMDVHDGKVVSTHEQVLRTKN) are tail. The interval 431 to 484 (HLSSSQFSSSSQFSSGSQSSRDVTSTNRQIRTKVMDVHDGKVVSTHEQVLRTKN) is interaction with Type I keratins and keratin filaments. The span at 435-450 (SQFSSSSQFSSGSQSS) shows a compositional bias: low complexity. A disordered region spans residues 435–457 (SQFSSSSQFSSGSQSSRDVTSTN). Phosphoserine is present on Ser447.

It belongs to the intermediate filament family. As to quaternary structure, heterotetramer of two type I and two type II keratins. Forms a disulfide-linked heterodimer (via 2B domains) with KRT5 (via 2B domains). Forms a heterodimer with KRT1; the interaction is more abundant in the absence of KRT5. Interacts with PLEC isoform 1C, when in a heterodimer with KRT5. Interacts with TRADD and with keratin filaments. Associates with other type I keratins. Interacts with EPPK1. Interacts with KLHL24. Interacts with PKP1 (via N-terminus) and PKP2. Post-translationally, a disulfide bond is formed between rather than within filaments and promotes the formation of a keratin filament cage around the nucleus. In terms of processing, ubiquitinated by the BCR(KLHL24) E3 ubiquitin ligase complex. As to expression, expressed in the corneal epithelium (at protein level). Expressed in the basal layer of the epidermis and the outer root sheath of hair follicles (at protein level). Expressed in the epithelial basal layer in the tail epidermis. Expressed in the parabasal cell row, basal cell layer, and suprabasal epithelial layer of the tongue.

It is found in the cytoplasm. The protein localises to the nucleus. In terms of biological role, the nonhelical tail domain is involved in promoting KRT5-KRT14 filaments to self-organize into large bundles and enhances the mechanical properties involved in resilience of keratin intermediate filaments in vitro. In Mus musculus (Mouse), this protein is Keratin, type I cytoskeletal 14 (Krt14).